The sequence spans 614 residues: Pentatricopeptide repeat-containing protein At1g63080, mitochondrial (614 aa).

A mitochondrion-targeting transit peptide spans 1 to 7 (MSLAKRF). PPR repeat units follow at residues 64–98 (SIVE…GVSH), 99–133 (NLYT…GYGP), 134–168 (SIVT…GYQP), 169–203 (DTVT…GCQP), 204–238 (DLVT…KIEA), 239–273 (DVVI…GIRP), 274–308 (DVFT…KINP), 309–343 (NVVT…SIDP), 344–378 (NIVT…DCLP), 379–413 (DVVT…GLVG), 414–448 (NTVT…GVHP), 449–483 (NIMT…KMEP), 484–518 (DIYT…GVKP), 519–553 (DVIA…GPLP), and 554–588 (DSGT…RFAG).

It belongs to the PPR family. P subfamily.

The protein localises to the mitochondrion. The polypeptide is Pentatricopeptide repeat-containing protein At1g63080, mitochondrial (Arabidopsis thaliana (Mouse-ear cress)).